We begin with the raw amino-acid sequence, 434 residues long: Trigger factor (434 aa).

In terms of domain architecture, PPIase FKBP-type spans 163 to 248 (GDTAVIDFAG…VHDIKRKELP (86 aa)).

This sequence belongs to the FKBP-type PPIase family. Tig subfamily.

It is found in the cytoplasm. The enzyme catalyses [protein]-peptidylproline (omega=180) = [protein]-peptidylproline (omega=0). Involved in protein export. Acts as a chaperone by maintaining the newly synthesized protein in an open conformation. Functions as a peptidyl-prolyl cis-trans isomerase. The protein is Trigger factor of Shouchella clausii (strain KSM-K16) (Alkalihalobacillus clausii).